Reading from the N-terminus, the 171-residue chain is LIM domain transcription factor LMO4-B (171 aa).

Over residues 1–19 (MVNNRISESTTTAVSNNGS) the composition is skewed to polar residues. Residues 1 to 20 (MVNNRISESTTTAVSNNGSP) form a disordered region. 2 LIM zinc-binding domains span residues 22-84 (KACA…LFGN) and 86-148 (GACN…GLLN).

Functionally, acts as a positive cofactor of GATA transcription factors to establish the identity of the ventral mesoderm during gastrulation. Down-regulation in the dorsal mesoderm is necessary for the proper formation of this territory since, when present, lmo4 may bind ldb1 and restrict the availability of this cofactor for Spemman organizer transcription factors. At neurula stages, suppresses primary neuron differentiation and modulates gene expression at the Isthmic Organizer of the midbrain-hindbrain boundary. In Xenopus laevis (African clawed frog), this protein is LIM domain transcription factor LMO4-B (lmo4-b).